The primary structure comprises 242 residues: Large ribosomal subunit protein uL1 (242 aa).

Belongs to the universal ribosomal protein uL1 family. As to quaternary structure, part of the 50S ribosomal subunit.

In terms of biological role, binds directly to 23S rRNA. The L1 stalk is quite mobile in the ribosome, and is involved in E site tRNA release. Its function is as follows. Protein L1 is also a translational repressor protein, it controls the translation of the L11 operon by binding to its mRNA. The chain is Large ribosomal subunit protein uL1 from Streptomyces virginiae (Streptomyces cinnamonensis).